Consider the following 493-residue polypeptide: Glutamate synthase [NADPH] small chain (493 aa).

Position 299–313 (299–313 (GGGDTGADCVATALR)) interacts with NADP(+).

Belongs to the glutamate synthase family. As to quaternary structure, aggregate of 4 catalytic active heterodimers, consisting of a large and a small subunit.

It carries out the reaction 2 L-glutamate + NADP(+) = L-glutamine + 2-oxoglutarate + NADPH + H(+). It participates in amino-acid biosynthesis; L-glutamate biosynthesis via GLT pathway; L-glutamate from 2-oxoglutarate and L-glutamine (NADP(+) route): step 1/1. The protein operates within energy metabolism; nitrogen metabolism. The polypeptide is Glutamate synthase [NADPH] small chain (gltB) (Bacillus subtilis (strain 168)).